Consider the following 666-residue polypeptide: UvrABC system protein B (666 aa).

Residues 25–412 (NGIKNNNKWQ…SENIAEQVIR (388 aa)) form the Helicase ATP-binding domain. 38–45 (GVTGSGKT) contacts ATP. The Beta-hairpin motif lies at 91-114 (YYDYYQPEAYVAQTDTYIEKDASI). The 167-residue stretch at 429-595 (QIDDLYSEIK…TIKKAVRDVI (167 aa)) folds into the Helicase C-terminal domain. The region spanning 622–657 (DKLIKEFEKEMKEAAKELQFEKAAYFRDKVNELKKK) is the UVR domain.

The protein belongs to the UvrB family. As to quaternary structure, forms a heterotetramer with UvrA during the search for lesions. Interacts with UvrC in an incision complex.

It localises to the cytoplasm. The UvrABC repair system catalyzes the recognition and processing of DNA lesions. A damage recognition complex composed of 2 UvrA and 2 UvrB subunits scans DNA for abnormalities. Upon binding of the UvrA(2)B(2) complex to a putative damaged site, the DNA wraps around one UvrB monomer. DNA wrap is dependent on ATP binding by UvrB and probably causes local melting of the DNA helix, facilitating insertion of UvrB beta-hairpin between the DNA strands. Then UvrB probes one DNA strand for the presence of a lesion. If a lesion is found the UvrA subunits dissociate and the UvrB-DNA preincision complex is formed. This complex is subsequently bound by UvrC and the second UvrB is released. If no lesion is found, the DNA wraps around the other UvrB subunit that will check the other stand for damage. The protein is UvrABC system protein B of Clostridium acetobutylicum (strain ATCC 824 / DSM 792 / JCM 1419 / IAM 19013 / LMG 5710 / NBRC 13948 / NRRL B-527 / VKM B-1787 / 2291 / W).